Consider the following 142-residue polypeptide: Large ribosomal subunit protein uL13 (142 aa).

Belongs to the universal ribosomal protein uL13 family. As to quaternary structure, part of the 50S ribosomal subunit.

This protein is one of the early assembly proteins of the 50S ribosomal subunit, although it is not seen to bind rRNA by itself. It is important during the early stages of 50S assembly. The polypeptide is Large ribosomal subunit protein uL13 (Xylella fastidiosa (strain M23)).